We begin with the raw amino-acid sequence, 273 residues long: Putative esterase/lipase 3 (273 aa).

H34 is a catalytic residue. The Charge relay system role is filled by S100.

Belongs to the lipase/esterase LIP3/BchO family.

The polypeptide is Putative esterase/lipase 3 (Mycoplasma genitalium (strain ATCC 33530 / DSM 19775 / NCTC 10195 / G37) (Mycoplasmoides genitalium)).